The sequence spans 494 residues: Vacuolar-processing enzyme (494 aa).

Positions methionine 1–alanine 20 are cleaved as a signal peptide. N-linked (GlcNAc...) asparagine glycosylation occurs at asparagine 151. Histidine 178 is a catalytic residue. The active-site Nucleophile is cysteine 220. Cysteine 253 and cysteine 267 are oxidised to a cystine. Residue asparagine 336 is glycosylated (N-linked (GlcNAc...) asparagine). 2 cysteine pairs are disulfide-bonded: cysteine 430/cysteine 460 and cysteine 442/cysteine 477.

This sequence belongs to the peptidase C13 family. As to expression, high levels are seen in the flowers, a lower level expression is seen in the leaves, while very low levels are seen in the stems and roots.

In terms of biological role, asparagine-specific endopeptidase that may be involved in processing of proteins targeted to vacuoles that accumulate during ethylene-regulated processes such as flower opening and flavedo degreening. In Citrus sinensis (Sweet orange), this protein is Vacuolar-processing enzyme.